The sequence spans 324 residues: Olfactory receptor 5A2 (324 aa).

Residues 1-26 are Extracellular-facing; sequence MAVGRNNTIVTKFILLGLSDHPQMKI. Residue N6 is glycosylated (N-linked (GlcNAc...) asparagine). Residues 27-47 form a helical membrane-spanning segment; sequence FLFMLFLGLYLLTLAWNLSLI. Over 48–55 the chain is Cytoplasmic; sequence ALIKMDSH. Residues 56–76 traverse the membrane as a helical segment; sequence LHMPMYFFLSNLSFLDICYVS. Residues 77–100 are Extracellular-facing; that stretch reads STAPKMLSDIITEQKTISFVGCAT. A disulfide bridge links C98 with C190. Residues 101-121 form a helical membrane-spanning segment; it reads QYFVFCGMGLTECFLLAAMAY. Residues 122-134 are Cytoplasmic-facing; the sequence is DRYAAICNPLLYT. A helical transmembrane segment spans residues 135 to 155; sequence VLISHTLCLKMVVGAYVGGFL. Residues 156-197 are Extracellular-facing; the sequence is SSFIETYSVYQHDFCGPYMINHFFCDLPPVLALSCSDTFTSE. A helical transmembrane segment spans residues 198-218; sequence VVTFIVSVVVGIVSVLVVLIS. Residues 219–238 lie on the Cytoplasmic side of the membrane; the sequence is YGYIVAAVVKISSATGRTKA. A helical membrane pass occupies residues 239–259; that stretch reads FSTCASHLTAVTLFYGSGFFM. The Extracellular portion of the chain corresponds to 260-272; it reads YMRPSSSYSLNRD. A helical transmembrane segment spans residues 273–293; that stretch reads KVVSIFYALVIPVVNPIIYSF. Residues 294-324 lie on the Cytoplasmic side of the membrane; that stretch reads RNKEIKNAMRKAMERDPGISHGGPFIFMTLG.

It belongs to the G-protein coupled receptor 1 family.

Its subcellular location is the cell membrane. Odorant receptor. The protein is Olfactory receptor 5A2 (OR5A2) of Homo sapiens (Human).